A 290-amino-acid polypeptide reads, in one-letter code: Acetylglutamate kinase (290 aa).

Residues 60–61 (GG), R82, and N187 contribute to the substrate site.

Belongs to the acetylglutamate kinase family. ArgB subfamily.

The protein resides in the cytoplasm. It carries out the reaction N-acetyl-L-glutamate + ATP = N-acetyl-L-glutamyl 5-phosphate + ADP. The protein operates within amino-acid biosynthesis; L-arginine biosynthesis; N(2)-acetyl-L-ornithine from L-glutamate: step 2/4. Catalyzes the ATP-dependent phosphorylation of N-acetyl-L-glutamate. In Marinobacter nauticus (strain ATCC 700491 / DSM 11845 / VT8) (Marinobacter aquaeolei), this protein is Acetylglutamate kinase.